The following is a 384-amino-acid chain: GDP/UDP-N,N'-diacetylbacillosamine 2-epimerase (hydrolyzing) (384 aa).

Belongs to the UDP-N-acetylglucosamine 2-epimerase family.

The enzyme catalyses GDP-N,N'-diacetylbacillosamine + H2O = 2,4-diacetamido-2,4,6-trideoxy-alpha-D-mannopyranose + GDP + H(+). The catalysed reaction is UDP-N,N'-diacetylbacillosamine + H2O = 2,4-diacetamido-2,4,6-trideoxy-alpha-D-mannopyranose + UDP + H(+). Functionally, involved in biosynthesis of legionaminic acid (5,7-diamino-3,5,7,9-tetradeoxy-D-glycero-D-galacto-non-2-ulosonic acid)(Leg), a sialic acid-like derivative that is incorporated into flagellin via O-linkage to Ser/Thr. Catalyzes the conversion of GDP-N,N'-diacetylbacillosamine (Bac2Ac4Ac) into 2,4-diacetamido-2,4,6-trideoxymannose and GDP. It can also use UDP-N,N'-diacetylbacillosamine however it generates small quantities of 2,4-diacetamido-2,4,6-trideoxymannose. The protein is GDP/UDP-N,N'-diacetylbacillosamine 2-epimerase (hydrolyzing) (legG) of Campylobacter jejuni subsp. jejuni serotype O:2 (strain ATCC 700819 / NCTC 11168).